Consider the following 515-residue polypeptide: Zinc metalloproteinase-disintegrin-like EoMP06 (515 aa).

The propeptide occupies 1–94 (VEDHCYYHGR…TLGLIVPPHG (94 aa)). Gln-95 bears the Pyrrolidone carboxylic acid mark. The Peptidase M12B domain maps to 100–296 (KFIELIIVVD…YNPKCIVDPP (197 aa)). A Ca(2+)-binding site is contributed by Glu-103. A glycan (N-linked (GlcNAc...) asparagine) is linked at Asn-160. Residue Asp-187 participates in Ca(2+) binding. N-linked (GlcNAc...) asparagine glycosylation is found at Asn-194 and Asn-225. 3 disulfide bridges follow: Cys-211–Cys-291, Cys-251–Cys-275, and Cys-253–Cys-258. Zn(2+) is bound at residue His-236. The active site involves Glu-237. Positions 240 and 246 each coordinate Zn(2+). Residues Cys-291, Val-306, Asn-309, Val-311, Glu-313, Glu-316, and Asp-319 each coordinate Ca(2+). Residues 304 to 390 (PAVCGNGVWE…ECPRNEFQRN (87 aa)) form the Disintegrin domain. Disulfide bonds link Cys-307–Cys-336, Cys-318–Cys-331, Cys-320–Cys-326, Cys-330–Cys-353, Cys-344–Cys-350, Cys-349–Cys-375, Cys-362–Cys-382, Cys-369–Cys-401, Cys-394–Cys-406, Cys-413–Cys-466, Cys-428–Cys-477, Cys-441–Cys-454, Cys-461–Cys-503, and Cys-497–Cys-508. The D/ECD-tripeptide signature appears at 368 to 370 (DCD). Ca(2+) contacts are provided by Asp-370, Val-371, and Asn-385.

The protein belongs to the venom metalloproteinase (M12B) family. P-III subfamily. P-IIIa sub-subfamily. As to quaternary structure, monomer. The cofactor is Zn(2+). As to expression, expressed by the venom gland.

Its subcellular location is the secreted. Functionally, snake venom zinc metalloproteinase that catalyzes the conversion of prothrombin (F2) to alpha-thrombin through formation of a thrombin intermediate, thereby functioning as a procoagulant protein. The protein is Zinc metalloproteinase-disintegrin-like EoMP06 of Echis ocellatus (Ocellated saw-scaled viper).